The sequence spans 645 residues: MPRRRLLKLLFIGKLRVSCKHYSTAGDPTKLVNLSEFTPDKIRNFGIVAHVDHGKSTLADRLLEMCGAVPPGQKQMLDKLQVERERGITVKAQTAALRHRGYLLNLIDTPGHVDFSAEVSRSLAVCDGILLLVAANQGVQAQTIANFWLAFEKNIQIIPVINKIDLPGADIKSVETQLKNLFEFNPEECLHISAKSGLNVDKVLEAIIDRVPAPTAIIDAPFRSMIFDSYFDHFRGAIAHIMVKEGSVKKGDKIQSYQNEKVYDVSEVGVMRPEMVKCTELRAGQVGYLVCNMRTVNEAVVGETLFAETTSRDSVKTFAEIKGVKPTVYAGLFPVETSDYESLKQAVERLCLNDPSVTVIPDSSKALGLGWRIGFLGVLHMEVFGARLSQEYDASVILCQPSVEYRAKIKDNETIRKKRYDGMEEIRILDPSKFPDESDVDSFLEPMVKVRMIVPNEMMGTVNGLCSECRGERGEITSIDSTRLVILWRLPLAEVAVDFFERLKKLTSGYASFDYEPDGWQDTRLVKLTILINSKEVSEFSQIIPAAMARDRAKILVQRLKREIPRQQFEVTIKACIGSSTKALSQIVIQPMKRDFSQLLKGNFGGGGMERLNKKLSHQKKGKERMKMVGNVQIPKEAFLNVLKR.

A tr-type G domain is found at 40 to 215 (DKIRNFGIVA…AIIDRVPAPT (176 aa)). GTP is bound by residues 49-56 (AHVDHGKS), 108-112 (DTPGH), and 162-165 (NKID).

This sequence belongs to the TRAFAC class translation factor GTPase superfamily. Classic translation factor GTPase family. LepA subfamily.

It is found in the mitochondrion inner membrane. It carries out the reaction GTP + H2O = GDP + phosphate + H(+). In terms of biological role, promotes mitochondrial protein synthesis. May act as a fidelity factor of the translation reaction, by catalyzing a one-codon backward translocation of tRNAs on improperly translocated ribosomes. Binds to mitochondrial ribosomes in a GTP-dependent manner. The polypeptide is Translation factor GUF1 homolog, mitochondrial (Caenorhabditis elegans).